The chain runs to 120 residues: Large ribosomal subunit protein uL18 (120 aa).

Residues 1–22 (MITKTSKNAARQKRHARVRAKL) are disordered. A compositionally biased stretch (basic residues) spans 10 to 20 (ARQKRHARVRA).

It belongs to the universal ribosomal protein uL18 family. Part of the 50S ribosomal subunit; part of the 5S rRNA/L5/L18/L25 subcomplex. Contacts the 5S and 23S rRNAs.

Its function is as follows. This is one of the proteins that bind and probably mediate the attachment of the 5S RNA into the large ribosomal subunit, where it forms part of the central protuberance. This chain is Large ribosomal subunit protein uL18, found in Bacillus velezensis (strain DSM 23117 / BGSC 10A6 / LMG 26770 / FZB42) (Bacillus amyloliquefaciens subsp. plantarum).